We begin with the raw amino-acid sequence, 155 residues long: DNA gyrase inhibitor (155 aa).

Belongs to the DNA gyrase inhibitor family. In terms of assembly, interacts with DNA gyrase.

The protein localises to the cytoplasm. Inhibits the supercoiling activity of DNA gyrase. Acts by inhibiting DNA gyrase at an early step, prior to (or at the step of) binding of DNA by the gyrase. It protects cells against toxins that target DNA gyrase, by inhibiting activity of these toxins and reducing the formation of lethal double-strand breaks in the cell. This is DNA gyrase inhibitor from Citrobacter koseri (strain ATCC BAA-895 / CDC 4225-83 / SGSC4696).